A 100-amino-acid polypeptide reads, in one-letter code: Large ribosomal subunit protein bL27 (100 aa).

A propeptide spanning residues 1 to 13 (MNKLYWLTDLQLF) is cleaved from the precursor. A compositionally biased stretch (basic and acidic residues) spans 18 to 29 (GVDSSKNGRDSN). Positions 18 to 39 (GVDSSKNGRDSNPKYLGAKLGD) are disordered.

This sequence belongs to the bacterial ribosomal protein bL27 family. The N-terminus is cleaved by ribosomal processing cysteine protease Prp.

This Ureaplasma urealyticum serovar 10 (strain ATCC 33699 / Western) protein is Large ribosomal subunit protein bL27.